Reading from the N-terminus, the 469-residue chain is 3-isopropylmalate dehydratase large subunit (469 aa).

Residues cysteine 350, cysteine 410, and cysteine 413 each coordinate [4Fe-4S] cluster.

Belongs to the aconitase/IPM isomerase family. LeuC type 1 subfamily. As to quaternary structure, heterodimer of LeuC and LeuD. It depends on [4Fe-4S] cluster as a cofactor.

It catalyses the reaction (2R,3S)-3-isopropylmalate = (2S)-2-isopropylmalate. The protein operates within amino-acid biosynthesis; L-leucine biosynthesis; L-leucine from 3-methyl-2-oxobutanoate: step 2/4. Its function is as follows. Catalyzes the isomerization between 2-isopropylmalate and 3-isopropylmalate, via the formation of 2-isopropylmaleate. This is 3-isopropylmalate dehydratase large subunit from Rhizobium leguminosarum bv. trifolii (strain WSM2304).